The sequence spans 376 residues: Formate dehydrogenase 2 (376 aa).

Substrate contacts are provided by Val-97 and Asn-121. NAD(+) is bound by residues 176-177, Asp-197, 244-248, Thr-270, Asp-296, and 325-328; these read RI, PLHKD, and HISG.

It belongs to the D-isomer specific 2-hydroxyacid dehydrogenase family. FDH subfamily. As to quaternary structure, homodimer.

Its subcellular location is the cytoplasm. The catalysed reaction is formate + NAD(+) = CO2 + NADH. Its function is as follows. Catalyzes the NAD(+)-dependent oxidation of formate to carbon dioxide. Formate oxidation is the final step in the methanol oxidation pathway in methylotrophic microorganisms. Has a role in the detoxification of exogenous formate in non-methylotrophic organisms. The sequence is that of Formate dehydrogenase 2 (FDH2) from Saccharomyces cerevisiae (strain CEN.PK113-7D) (Baker's yeast).